The sequence spans 408 residues: Na(+)/H(+) antiporter NhaA 2 (408 aa).

11 helical membrane passes run 36 to 56 (GILL…GLGV), 79 to 99 (ILLW…GLEI), 115 to 135 (ALPV…YFLF), 145 to 165 (GWGI…SLLG), 174 to 194 (IFLA…IAVF), 197 to 217 (SELH…LMVF), 225 to 245 (LFFY…SGIH), 281 to 301 (FIIM…SEML), 310 to 330 (LGII…MSWL), 348 to 368 (VLGL…IALL), and 381 to 401 (FAIL…LSSY).

The protein belongs to the NhaA Na(+)/H(+) (TC 2.A.33) antiporter family.

The protein resides in the cell inner membrane. The enzyme catalyses Na(+)(in) + 2 H(+)(out) = Na(+)(out) + 2 H(+)(in). Its function is as follows. Na(+)/H(+) antiporter that extrudes sodium in exchange for external protons. The chain is Na(+)/H(+) antiporter NhaA 2 from Flavobacterium johnsoniae (strain ATCC 17061 / DSM 2064 / JCM 8514 / BCRC 14874 / CCUG 350202 / NBRC 14942 / NCIMB 11054 / UW101) (Cytophaga johnsonae).